The following is a 72-amino-acid chain: Large ribosomal subunit protein bL28 (72 aa).

Belongs to the bacterial ribosomal protein bL28 family.

The polypeptide is Large ribosomal subunit protein bL28 (Chlorobaculum parvum (strain DSM 263 / NCIMB 8327) (Chlorobium vibrioforme subsp. thiosulfatophilum)).